Consider the following 399-residue polypeptide: S-adenosylmethionine synthase (399 aa).

His17 lines the ATP pocket. A Mg(2+)-binding site is contributed by Asp19. Glu52 contacts K(+). Residues Glu65 and Gln109 each coordinate L-methionine. The tract at residues 109–119 is flexible loop; the sequence is QSADIAQGVDA. ATP contacts are provided by residues 177 to 179, 243 to 244, Asp252, 258 to 259, Ala275, and Lys279; these read DSK, KF, and RK. Asp252 provides a ligand contact to L-methionine. Lys283 is a binding site for L-methionine.

It belongs to the AdoMet synthase family. As to quaternary structure, homotetramer; dimer of dimers. Mg(2+) is required as a cofactor. K(+) serves as cofactor.

The protein localises to the cytoplasm. The enzyme catalyses L-methionine + ATP + H2O = S-adenosyl-L-methionine + phosphate + diphosphate. The protein operates within amino-acid biosynthesis; S-adenosyl-L-methionine biosynthesis; S-adenosyl-L-methionine from L-methionine: step 1/1. Functionally, catalyzes the formation of S-adenosylmethionine (AdoMet) from methionine and ATP. The overall synthetic reaction is composed of two sequential steps, AdoMet formation and the subsequent tripolyphosphate hydrolysis which occurs prior to release of AdoMet from the enzyme. The sequence is that of S-adenosylmethionine synthase from Bradyrhizobium sp. (strain BTAi1 / ATCC BAA-1182).